Reading from the N-terminus, the 172-residue chain is MSSSQNNNSSWIDWFLGIKGNQFLCRVPTDYVQDTFNQMGLEYFSEILDVILKPVIDSSSGLLYGDEKKWYGMIHARYIRSERGLIAMHRKYLRGDFGSCPNISCDRQNTLPVGLSAVWGKSTVKIHCPRCKSNFHPKSDTQLDGAMFGPSFPDIFFSMLPNLTSPLDDPRT.

Belongs to the casein kinase 2 subunit beta family. As to quaternary structure, interacts in vitro with the casein kinase 2 alpha subunit (CkII-alpha). The relevance of such interaction is however unclear in vivo. Probably not expressed in wild-type flies. In males lacking the Y chromosome, it is testis-specific and constitutes the main component of star-shaped crystals.

Unknown. In males lacking the Y chromosome, its strong overexpression leads to the appearance of proteinaceous star-shaped crystals in the primary spermatocytes causing meiotic drive, possibly by interfering with normal casein kinase 2 activity. This is Stellate protein CG33236/CG33240/CG33244/CG33245 (Ste:CG33236) from Drosophila melanogaster (Fruit fly).